A 539-amino-acid polypeptide reads, in one-letter code: uncharacterized protein (539 aa).

Residues 316–433 form a disordered region; sequence AEHHHQKGKK…ATVERSSPPE (118 aa). Positions 318–352 are enriched in basic residues; that stretch reads HHHQKGKKVPATHRRSSTPHARKTAGTRARTRARK. Residues 362–384 show a composition bias toward basic and acidic residues; that stretch reads KISKKDSGESKQKDETAGMERVF. Residues 390–402 show a composition bias toward polar residues; the sequence is NVRTCSSRASRTG.

This is an uncharacterized protein from Treponema pallidum (strain Nichols).